We begin with the raw amino-acid sequence, 168 residues long: Cyclin-dependent kinase 4 inhibitor C (168 aa).

ANK repeat units follow at residues 4 to 33, 37 to 65, 69 to 98, 102 to 132, and 136 to 165; these read PWGNELASAAARGDLEQLTSLLQNNVNVNA, FGRTALQVMKLGNPEIARRLLLRGANPNL, TGFAVIHDAARAGFLDTVQALLEFQADVNI, EGNLPLHLAAKEGHLPVVEFLMKHTACNVGH, and KGDTAFDLARFYGRNEVISLMEANGVGGAT.

It belongs to the CDKN2 cyclin-dependent kinase inhibitor family. As to quaternary structure, heterodimer of p18 with CDK6.

Interacts strongly with CDK6, weakly with CDK4. Inhibits cell growth and proliferation with a correlated dependence on endogenous retinoblastoma protein RB. This is Cyclin-dependent kinase 4 inhibitor C (Cdkn2c) from Mus musculus (Mouse).